We begin with the raw amino-acid sequence, 274 residues long: Elongation factor Ts (274 aa).

The involved in Mg(2+) ion dislocation from EF-Tu stretch occupies residues 79 to 82 (TDFV).

This sequence belongs to the EF-Ts family.

The protein localises to the cytoplasm. In terms of biological role, associates with the EF-Tu.GDP complex and induces the exchange of GDP to GTP. It remains bound to the aminoacyl-tRNA.EF-Tu.GTP complex up to the GTP hydrolysis stage on the ribosome. The protein is Elongation factor Ts of Azobacteroides pseudotrichonymphae genomovar. CFP2.